The sequence spans 323 residues: Ig gamma chain C region (323 aa).

Ig-like domains follow at residues 6–96 (PSVF…KTVA), 114–213 (PSVF…KTIS), and 222–318 (PKVY…KSIS).

In Oryctolagus cuniculus (Rabbit), this protein is Ig gamma chain C region.